A 492-amino-acid chain; its full sequence is Catalase (492 aa).

Residues His-65 and Asn-138 contribute to the active site. Tyr-348 serves as a coordination point for heme.

The protein belongs to the catalase family. As to quaternary structure, homotetramer. Requires heme as cofactor.

The protein resides in the cytoplasm. It is found in the cytosol. It localises to the peroxisome matrix. It catalyses the reaction 2 H2O2 = O2 + 2 H2O. Catalyzes the degradation of hydrogen peroxide (H(2)O(2)) generated by peroxisomal oxidases to water and oxygen, thereby protecting cells from the toxic effects of hydrogen peroxide. This is Catalase from Helianthus annuus (Common sunflower).